The primary structure comprises 1142 residues: Zinc finger MYM-type protein 1 (1142 aa).

Lysine 25 is covalently cross-linked (Glycyl lysine isopeptide (Lys-Gly) (interchain with G-Cter in SUMO2)). 3 consecutive MYM-type zinc fingers follow at residues 110-148 (QLFC…PKDV), 160-203 (KTFC…QYEV), and 210-245 (HNLC…SSSL). A Glycyl lysine isopeptide (Lys-Gly) (interchain with G-Cter in SUMO2) cross-link involves residue lysine 284. Residues 300 to 331 (ELFCSINCFSAYSKAKMESSSVSVVSVVHDTS) form an MYM-type 4 zinc finger. Polar residues predominate over residues 385 to 396 (KSSPSEPSNAVA). The tract at residues 385 to 413 (KSSPSEPSNAVASSSTEQPSVSPSSSVFS) is disordered. Low complexity predominate over residues 397–413 (SSSTEQPSVSPSSSVFS). The segment at 452 to 538 (KSRSIKKSCC…YQFCDGAVSD (87 aa)) adopts a TTF-type zinc-finger fold.

Its subcellular location is the nucleus. The polypeptide is Zinc finger MYM-type protein 1 (ZMYM1) (Homo sapiens (Human)).